Here is a 3550-residue protein sequence, read N- to C-terminus: Zinc finger homeobox protein 4 (3550 aa).

Met-1 bears the N-acetylmethionine mark. 3 disordered regions span residues 1–54, 426–479, and 521–614; these read METC…LKTD, HLSS…AYSN, and TSSS…IECP. Over residues 9-20 the composition is skewed to polar residues; sequence ISRQENGQSTSK. Basic and acidic residues-rich tracts occupy residues 39 to 54 and 433 to 451; these read EPDR…LKTD and KMSE…KEST. Residues 467–479 are compositionally biased toward acidic residues; that stretch reads EPGDEDEEDAYSN. Composition is skewed to polar residues over residues 542-553 and 566-576; these read GRSNGNVTNSYS and RDGTTAAPSET. 3 consecutive C2H2-type zinc fingers follow at residues 611 to 634, 642 to 665, and 697 to 721; these read IECP…TMMH, LKCP…KEKH, and FRCE…SDKH. The disordered stretch occupies residues 739-763; it reads HSAPTPNTSLSGCGTPSPSKPKQKP. Residues 742-752 are compositionally biased toward polar residues; it reads PTPNTSLSGCG. 4 C2H2-type zinc fingers span residues 765–787, 915–939, 971–993, and 1019–1043; these read RRCE…MTSE, YQCK…TDKH, LKCN…TTNH, and YYCA…SVKH. Residues 1100 to 1142 are disordered; sequence KAASEEPSEDAGDPLKPPTVAEDDEKEAHKRDNSEGKISTKDP. Residues 1125–1142 are compositionally biased toward basic and acidic residues; that stretch reads KEAHKRDNSEGKISTKDP. Lys-1165 participates in a covalent cross-link: Glycyl lysine isopeptide (Lys-Gly) (interchain with G-Cter in SUMO2). 2 C2H2-type zinc fingers span residues 1188–1211 and 1217–1240; these read YQYP…LSQH and ICCP…THLH. The interval 1271 to 1339 is disordered; it reads APEKSEQDPP…EWNKTSSKDV (69 aa). Basic and acidic residues predominate over residues 1297–1326; the sequence is VDDKSMSGLEDSKVGVEIKNEEQKPAKEPV. Lys-1315 participates in a covalent cross-link: Glycyl lysine isopeptide (Lys-Gly) (interchain with G-Cter in SUMO2). 2 consecutive C2H2-type zinc fingers follow at residues 1368–1390 and 1396–1419; these read YRCN…SQYH and TMCT…EAGH. Residues 1467-1492 form a disordered region; it reads EGKASPVESDGSSIPDDLGLEPKRTL. The C2H2-type 12 zinc-finger motif lies at 1512–1538; it reads YKCTVCKESFTQKNILLVHYNSVSHLH. Lys-1562 participates in a covalent cross-link: Glycyl lysine isopeptide (Lys-Gly) (interchain with G-Cter in SUMO2). The C2H2-type 13 zinc finger occupies 1564–1588; sequence YKCSTCSVAYSQSSTLEIHMRSVLH. The disordered stretch occupies residues 1779 to 1873; sequence PQLQPQNQQP…CIPPPRIASG (95 aa). The segment covering 1792–1808 has biased composition (low complexity); sequence QQQQPQQQPSKLLKQEQ. Lys-1805 participates in a covalent cross-link: Glycyl lysine isopeptide (Lys-Gly) (interchain with G-Cter in SUMO2). Positions 1823–1860 are enriched in basic and acidic residues; it reads PSYKEAEEVTEKQEKPKQEFINDTEGLKDSKDIKKQKS. Residues 1916–1939 form a C2H2-type 14 zinc finger; that stretch reads LECGICGKLFSNVLILKSHQEHVH. The tract at residues 1984 to 2006 is disordered; sequence KIPNTVSAPLQAPPPTPPSAPQQ. Over residues 1994–2003 the composition is skewed to pro residues; that stretch reads QAPPPTPPSA. 2 consecutive DNA-binding regions (homeobox) follow at residues 2069 to 2128 and 2166 to 2225; these read FKRP…RQRN and KRSS…RKSY. The C2H2-type 15; degenerate zinc-finger motif lies at 2252 to 2276; that stretch reads YQCKKCNVVFPRIFDLITHQKKQCY. The segment covering 2318 to 2331 has biased composition (polar residues); that stretch reads TLVASSGSGTSTPL. Residues 2318 to 2412 are disordered; the sequence is TLVASSGSGT…SQTPIPSSPL (95 aa). The segment covering 2337–2355 has biased composition (basic and acidic residues); that stretch reads PEPEKNSPKTEYPGEKTKQ. The span at 2356 to 2376 shows a compositional bias: polar residues; it reads SDPSLPQGTKSAPSSVLTSSE. A compositionally biased stretch (pro residues) spans 2383 to 2392; that stretch reads PQPPTQPPKQ. A compositionally biased stretch (polar residues) spans 2401-2412; that stretch reads SASQTPIPSSPL. A C2H2-type 16 zinc finger spans residues 2430–2452; sequence YPCDQCTLAFPTLELWKEHQHMH. Residues 2490–2508 show a composition bias toward polar residues; the sequence is GSSLTQMPPQTSTAHTTAP. Positions 2490–2545 are disordered; that stretch reads GSSLTQMPPQTSTAHTTAPASVAASLKRKLEDKEDNNCSEKEGGNSGEDQHRDKRL. The segment covering 2517–2541 has biased composition (basic and acidic residues); the sequence is RKLEDKEDNNCSEKEGGNSGEDQHR. Positions 2542–2601 form a DNA-binding region, homeobox 3; that stretch reads DKRLRTTITPEQLEILYEKYLLDSNPTRKMLDHIAREVGLKKRVVQVWFQNTRARERKGQ. The C2H2-type 17 zinc-finger motif lies at 2612-2635; sequence KRCPFCRALFKAKSALESHIRSRH. The residue at position 2645 (Ser-2645) is a Phosphoserine. Disordered regions lie at residues 2746-2791 and 2810-2866; these read AISD…ATTP and HFND…PGHK. The span at 2781-2791 shows a compositional bias: polar residues; sequence LDSLQKPATTP. Residues 2811–2820 show a composition bias toward basic and acidic residues; sequence FNDKDGDHDQ. Residues 2843 to 2855 show a composition bias toward low complexity; the sequence is PSSPNPFGSSNPF. The segment at residues 2865–2924 is a DNA-binding region (homeobox 4); the sequence is HKRFRTQMSNLQLKVLKACFSDYRTPTMQECEMLGNEIGLPKRVVQVWFQNARAKERKFK. Residues 2943–2967 form a C2H2-type 18 zinc finger; that stretch reads PECTLCGVKYSARLSIRDHIFSKQH. Disordered stretches follow at residues 3051–3156 and 3261–3318; these read PSSL…EEKI and QDSL…VQLD. Over residues 3058-3068 the composition is skewed to polar residues; the sequence is PQNSNTLTSPG. Residues 3075–3088 are compositionally biased toward low complexity; sequence PSSATSSPALSLSS. A compositionally biased stretch (pro residues) spans 3097-3109; sequence TPPPPPPPPPPPS. Over residues 3136–3156 the composition is skewed to basic and acidic residues; the sequence is IKEEESEAIKPEKHPKKEEKI. A Glycyl lysine isopeptide (Lys-Gly) (interchain with G-Cter in SUMO2) cross-link involves residue Lys-3137. Positions 3248–3277 form a coiled coil; sequence ALLQQYQQYQQSLQDSLQKQQKQQQEQQQK. A compositionally biased stretch (low complexity) spans 3261 to 3276; the sequence is QDSLQKQQKQQQEQQQ. Basic and acidic residues predominate over residues 3298–3318; the sequence is SETKEEKSTAPESTKEEVQLD. The segment at 3337 to 3361 adopts a C2H2-type 19; degenerate zinc-finger fold; it reads FVCRKCQMMFTDEDATVNHQKSFCY. The C2H2-type 20 zinc finger occupies 3381–3405; it reads YQCLACDLALSGNEALSQHLQSSLH. Residues 3424–3445 form a disordered region; the sequence is LPHSVCSPPPNTSSTSPSAASS. Positions 3435-3445 are enriched in low complexity; it reads TSSTSPSAASS.

It belongs to the krueppel C2H2-type zinc-finger protein family. In terms of tissue distribution, expressed in brain, heart, lung, muscle and small intestine. No expression detected in undifferentiated P19 cells, however, expression was seen following retinoic acid treatment to induce neuronal differentiation. Expressed in undifferentiated C2C12 cells, following induction of muscle differentiation in a low-serum medium, expression levels were decreased.

The protein resides in the nucleus. Its function is as follows. May play a role in neural and muscle differentiation. May be involved in transcriptional regulation. The protein is Zinc finger homeobox protein 4 (Zfhx4) of Mus musculus (Mouse).